The chain runs to 425 residues: 2-methylserine hydroxymethyltransferase (425 aa).

(6S)-5,6,7,8-tetrahydrofolate contacts are provided by residues Leu-126 and 130 to 132; that span reads GHL. Lys-235 bears the N6-(pyridoxal phosphate)lysine mark. Glu-251 is a (6S)-5,6,7,8-tetrahydrofolate binding site.

This sequence belongs to the SHMT family. In terms of assembly, homodimer. Pyridoxal 5'-phosphate is required as a cofactor.

It localises to the cytoplasm. The catalysed reaction is (6R)-5,10-methylene-5,6,7,8-tetrahydrofolate + D-alanine + H2O = 2-methylserine + (6S)-5,6,7,8-tetrahydrofolate. It functions in the pathway one-carbon metabolism; tetrahydrofolate interconversion. Inhibited by hydroxylamine and sodium borohydride. Its function is as follows. Catalyzes the reversible interconversion of alpha-methyl-L-serine to D-alanine with tetrahydrofolate (THF) serving as the one-carbon carrier. Cannot use alpha-methyl-D-serine, L-serine, D-serine or L-alanine. The chain is 2-methylserine hydroxymethyltransferase from Paracoccus sp.